A 442-amino-acid polypeptide reads, in one-letter code: Trigger factor (442 aa).

Residues 163-248 enclose the PPIase FKBP-type domain; that stretch reads YDRVTINYCI…IIKIEKKQEL (86 aa).

It belongs to the FKBP-type PPIase family. Tig subfamily.

The protein localises to the cytoplasm. It catalyses the reaction [protein]-peptidylproline (omega=180) = [protein]-peptidylproline (omega=0). Involved in protein export. Acts as a chaperone by maintaining the newly synthesized protein in an open conformation. Functions as a peptidyl-prolyl cis-trans isomerase. The protein is Trigger factor (tig) of Buchnera aphidicola subsp. Acyrthosiphon pisum (strain APS) (Acyrthosiphon pisum symbiotic bacterium).